The primary structure comprises 1014 residues: Regulator of telomere elongation helicase 1 homolog (1014 aa).

A Helicase ATP-binding domain is found at 7-324 (AGIPVHFPFE…KEMLLELEKA (318 aa)). Position 42 to 49 (42 to 49 (SPTGTGKT)) interacts with ATP. [4Fe-4S] cluster-binding residues include Cys-147, Cys-165, Cys-174, and Cys-210. The short motif at 253-256 (DEAH) is the DEAH box element. Phosphothreonine is present on Thr-873. A disordered region spans residues 891-917 (TDMVKTEPGTSNSCSYGNTSSSGSDSR). Residues 899 to 917 (GTSNSCSYGNTSSSGSDSR) are compositionally biased toward low complexity.

This sequence belongs to the helicase family. RAD3/XPD subfamily.

It localises to the nucleus. The catalysed reaction is ATP + H2O = ADP + phosphate + H(+). Functionally, a probable ATP-dependent DNA helicase implicated in DNA repair and the maintenance of genomic stability. Acts as an anti-recombinase to counteract toxic recombination and limit crossover during meiosis. Regulates meiotic recombination and crossover homeostasis by physically dissociating strand invasion events and thereby promotes noncrossover repair by meiotic synthesis dependent strand annealing (SDSA) as well as disassembly of D loop recombination intermediates. The polypeptide is Regulator of telomere elongation helicase 1 homolog (Drosophila mojavensis (Fruit fly)).